Here is a 1175-residue protein sequence, read N- to C-terminus: Potassium/sodium hyperpolarization-activated cyclic nucleotide-gated channel 4 (1175 aa).

The Cytoplasmic portion of the chain corresponds to 1–259; that stretch reads MDKLPPSMRK…SAGFWIIHPY (259 aa). Residues 17–186 form a disordered region; that stretch reads QQVGAKAWIM…SSCGEQRPAD (170 aa). Residues 26-36 show a composition bias toward acidic residues; that stretch reads MDEEEDAEEEG. The segment covering 60–75 has biased composition (low complexity); sequence PSAAAAAAGGAESRGA. The span at 111 to 126 shows a compositional bias: gly residues; sequence SRGGGGGGGSTGGGSH. Residues 128 to 140 are compositionally biased toward basic and acidic residues; sequence HLHDSAEERRLIA. Phosphoserine is present on serine 145. Pro residues predominate over residues 162–175; sequence PGAPAPPAASPPQV. A helical transmembrane segment spans residues 260–288; that stretch reads SDFRFYWDLTMLLLMVGNLIIIPVGITFF. Residues 289-292 lie on the Extracellular side of the membrane; the sequence is KDEN. Residues 293–316 traverse the membrane as a helical segment; the sequence is TTPWIVFNVVSDTFFLIDLVLNFR. The Cytoplasmic segment spans residues 317-329; sequence TGIVVEDNTDIIL. The helical transmembrane segment at 330 to 352 threads the bilayer; it reads DPRRIKMKYLKSWFVVDFVSSIP. The Extracellular portion of the chain corresponds to 353-374; that stretch reads VDYIFLIVETRIDSEVYKTARA. A helical; Voltage-sensor transmembrane segment spans residues 375–410; sequence LRIVRFTKILSLLRLLRLSRLIRYIHQWEEIFHMTY. The Cytoplasmic segment spans residues 411 to 413; the sequence is DLA. Residues 414-444 traverse the membrane as a helical segment; it reads SAVVRIVNLIGMMLLLCHWDGCLQFLVPMLQ. At 445–449 the chain is on the extracellular side; that stretch reads DFPDD. An intramembrane region (pore-forming) is located at residues 450–478; that stretch reads CWVSLNNMVNNSWGKQYSYALFKAMSHML. At 479-488 the chain is on the extracellular side; sequence CIGYGRQAPM. Residues 489 to 521 form a helical membrane-spanning segment; the sequence is GMSDVWLTMLSMIVGATCYAMFIGHATALIQSL. The Cytoplasmic portion of the chain corresponds to 522–1175; that stretch reads DSSRRQYQEK…PVRSKLPSNL (654 aa). 3',5'-cyclic GMP contacts are provided by tyrosine 560, lysine 563, phenylalanine 565, and glutamate 567. 3',5'-cyclic AMP is bound by residues glycine 660, glutamate 661, cysteine 663, arginine 670, threonine 671, valine 674, and arginine 711. Disordered stretches follow at residues 801-820 and 830-1175; these read AIFR…AGQT and LAPS…PSNL. Low complexity-rich tracts occupy residues 839–854, 900–912, 948–966, and 984–1004; these read SPAS…SSAS, LGGS…SPLL, SPTS…LSPG, and RLPF…SPRG. Residues 1038-1050 show a composition bias toward pro residues; sequence ASSPPPPPPPPAP. 2 positions are modified to phosphoserine: serine 1089 and serine 1093. The segment covering 1102 to 1114 has biased composition (pro residues); sequence PPFPRAPGRPPGA.

The protein belongs to the potassium channel HCN family. As to quaternary structure, homotetramer. The channel is composed of a homo- or heterotetrameric complex of pore-forming subunits. Interacts with PEX5L with a 4:4 HCN4:PEX5L stoichiometry; reduces the effects of cAMP on the voltage-dependence and rate of activation. Interacts with IRAG1; regulates HCN4 channel activity. Interacts with IRAG2; regulates HCN4 channel activity. S-palmitoylated. Highly expressed in the heart sinoatrial node (SAN). Not detected in atrium, ventricle, forebrain or cerebellum. Detected at very low levels in total brain.

Its subcellular location is the cell membrane. The catalysed reaction is K(+)(in) = K(+)(out). It catalyses the reaction Na(+)(in) = Na(+)(out). Its activity is regulated as follows. Activated by cAMP and to a lesser extent by cGMP and cCMP. cAMP binding causes a conformation change that leads to the assembly of an active tetramer and channel opening by shifting the voltage-dependency towards more positive voltages. Binding of cAMP removes a tonic inhibition conferred by cyclic nucleotide-binding domain (CNBD) on channel opening. Cyclic dinucleotides can modulate HCN4 channel; cyclic dinucleotides acting as potent antagonists of cAMP. Inhibited by extracellular Cs(+) ions. Auxiliary subunits can also regulate HCN4 channel. IRAG1 causes a gain-of-function by shifting HCN4 activation to more depolarized membrane potentials in the absence of cAMP. In contrast, IRAG2 causes a loss-of-function by inhibiting cAMP-dependent potentiation of HCN4 activation. Functionally, hyperpolarization-activated ion channel that are permeable to Na(+) and K(+) ions with very slow activation and inactivation. Exhibits higher selectivity for K(+) over Na(+) ions. Contributes to the native pacemaker currents in heart (If) that regulate the rhythm of heart beat. Contributes to the native pacemaker currents in neurons (Ih). May mediate responses to sour stimuli. The protein is Potassium/sodium hyperpolarization-activated cyclic nucleotide-gated channel 4 (HCN4) of Oryctolagus cuniculus (Rabbit).